We begin with the raw amino-acid sequence, 586 residues long: uncharacterized protein (586 aa).

Coiled-coil stretches lie at residues 183-293 and 331-400; these read THTE…ELEN and FKDK…DKKN.

This is an uncharacterized protein from Bacillus subtilis (strain 168).